The sequence spans 228 residues: Probable GTP-binding protein EngB (228 aa).

Residues 48–222 (YGLEVAFVGY…QFVLNNWFSS (175 aa)) form the EngB-type G domain. GTP is bound by residues 56 to 63 (GYSNSGKS), 83 to 87 (GRTRL), 101 to 104 (DFPG), 168 to 171 (NKMD), and 201 to 203 (FSS). Residues Ser63 and Thr85 each coordinate Mg(2+).

The protein belongs to the TRAFAC class TrmE-Era-EngA-EngB-Septin-like GTPase superfamily. EngB GTPase family. It depends on Mg(2+) as a cofactor.

In terms of biological role, necessary for normal cell division and for the maintenance of normal septation. The chain is Probable GTP-binding protein EngB from Buchnera aphidicola subsp. Baizongia pistaciae (strain Bp).